Here is a 336-residue protein sequence, read N- to C-terminus: GTPase Obg (336 aa).

The 159-residue stretch at 1-159 folds into the Obg domain; it reads MKFVDEATLI…KTLKLELKLL (159 aa). The 170-residue stretch at 160-329 folds into the OBG-type G domain; it reads ADVGLVGLPN…LIEAIFAQLR (170 aa). Residues 166–173, 191–195, 213–216, 283–286, and 310–312 each bind GTP; these read GLPNAGKS, FTTLA, DIPG, NKMD, and SAI. Positions 173 and 193 each coordinate Mg(2+).

The protein belongs to the TRAFAC class OBG-HflX-like GTPase superfamily. OBG GTPase family. In terms of assembly, monomer. Mg(2+) serves as cofactor.

The protein localises to the cytoplasm. Its function is as follows. An essential GTPase which binds GTP, GDP and possibly (p)ppGpp with moderate affinity, with high nucleotide exchange rates and a fairly low GTP hydrolysis rate. Plays a role in control of the cell cycle, stress response, ribosome biogenesis and in those bacteria that undergo differentiation, in morphogenesis control. The protein is GTPase Obg of Desulfatibacillum aliphaticivorans.